Here is a 157-residue protein sequence, read N- to C-terminus: MFDILMYLFENYVHSEVEFLVDEDELTQELTRAGFHQSEIIKALSWLENLAELQEGDTPYLCDHDQHSFRIYTQKEMDKLDVECRGFLLFLEQIKVLSVETREMVIDRVMELDETALILEDLKWVVLMVLFNAPGNESAYEQMEDLIFEQPDGRLHS.

Belongs to the Smg family.

In Shewanella sediminis (strain HAW-EB3), this protein is Protein Smg homolog.